Consider the following 564-residue polypeptide: Ubiquitin carboxyl-terminal hydrolase 39 (564 aa).

Residues Met-1–Ser-96 are disordered. Positions Ile-28–Glu-39 are enriched in basic and acidic residues. Ser-46 is modified (phosphoserine). Residue Lys-51 forms a Glycyl lysine isopeptide (Lys-Gly) (interchain with G-Cter in SUMO2) linkage. Over residues Arg-59–Val-69 the composition is skewed to low complexity. Ser-81 carries the post-translational modification Phosphoserine. A compositionally biased stretch (basic and acidic residues) spans Glu-84 to Ser-96. The segment at Arg-102 to Gln-199 adopts a UBP-type; degenerate zinc-finger fold. Zn(2+)-binding residues include Cys-135, Cys-138, His-154, and His-160. The 331-residue stretch at Val-224–Arg-554 folds into the USP domain.

The protein belongs to the peptidase C19 family. The U4/U6-U5 tri-snRNP complex is a building block of the precatalytic spliceosome (spliceosome B complex). Component of the U4/U6-U5 tri-snRNP complex composed of the U4, U6 and U5 snRNAs and at least PRPF3, PRPF4, PRPF6, PRPF8, PRPF31, SNRNP200, TXNL4A, SNRNP40, SNRPB, SNRPD1, SNRPD2, SNRPD3, SNRPE, SNRPF, SNRPG, DDX23, CD2BP2, PPIH, SNU13, EFTUD2, SART1 and USP39, plus LSM2, LSM3, LSM4, LSM5, LSM6, LSM7 and LSM8.

The protein resides in the nucleus. The enzyme catalyses Thiol-dependent hydrolysis of ester, thioester, amide, peptide and isopeptide bonds formed by the C-terminal Gly of ubiquitin (a 76-residue protein attached to proteins as an intracellular targeting signal).. In terms of biological role, deubiquitinating enzyme that plays a role in many cellular processes including cellular antiviral response, epithelial morphogenesis, DNA repair or B-cell development. Plays a role in pre-mRNA splicing as a component of the U4/U6-U5 tri-snRNP, one of the building blocks of the precatalytic spliceosome. Specifically regulates immunoglobulin gene rearrangement in a spliceosome-dependent manner, which involves modulating chromatin interactions at the Igh locus and therefore plays an essential role in B-cell development. Regulates AURKB mRNA levels, and thereby plays a role in cytokinesis and in the spindle checkpoint. Regulates apoptosis and G2/M cell cycle checkpoint in response to DNA damage by deubiquitinating and stabilizing CHK2. Also plays an important role in DNA repair by controlling the recruitment of XRCC4/LIG4 to DNA double-strand breaks for non-homologous end-joining repair. Participates in antiviral activity by affecting the type I IFN signaling by stabilizing STAT1 and decreasing its 'Lys-6'-linked ubiquitination. Contributes to non-canonical Wnt signaling during epidermal differentiation. Acts as a negative regulator NF-kappa-B activation through deubiquitination of 'Lys-48'-linked ubiquitination of NFKBIA. The polypeptide is Ubiquitin carboxyl-terminal hydrolase 39 (Mus musculus (Mouse)).